We begin with the raw amino-acid sequence, 560 residues long: Membrane protein insertase YidC (560 aa).

A run of 6 helical transmembrane segments spans residues 5 to 25 (IINL…WQYF), 334 to 354 (AIDF…MNFF), 357 to 377 (YVGN…LLMF), 431 to 451 (LPIL…YVTI), 476 to 496 (LFGL…WPIL), and 522 to 542 (FMPL…LIYW).

The protein belongs to the OXA1/ALB3/YidC family. Type 1 subfamily. Interacts with the Sec translocase complex via SecD. Specifically interacts with transmembrane segments of nascent integral membrane proteins during membrane integration.

The protein resides in the cell inner membrane. Its function is as follows. Required for the insertion and/or proper folding and/or complex formation of integral membrane proteins into the membrane. Involved in integration of membrane proteins that insert both dependently and independently of the Sec translocase complex, as well as at least some lipoproteins. Aids folding of multispanning membrane proteins. This Rickettsia akari (strain Hartford) protein is Membrane protein insertase YidC.